Here is a 1792-residue protein sequence, read N- to C-terminus: uncharacterized protein (1792 aa).

The span at M1–N28 shows a compositional bias: low complexity. 13 disordered regions span residues M1–G34, T162–H187, K440–S461, V544–N568, N736–N777, T837–K979, V1044–S1071, N1084–K1106, T1160–R1215, N1257–G1290, L1651–K1686, P1704–K1731, and I1742–N1761. Residues K169–K182 show a composition bias toward polar residues. Residues K550–T559 are compositionally biased toward basic residues. Low complexity predominate over residues P741–S776. The span at K838–K847 shows a compositional bias: basic residues. Over residues N856 to I873 the composition is skewed to basic and acidic residues. Residues N874–N924 show a composition bias toward low complexity. A compositionally biased stretch (basic residues) spans K943 to K954. The span at I955–Q966 shows a compositional bias: basic and acidic residues. Low complexity predominate over residues S1045–P1057. 3 stretches are compositionally biased toward basic and acidic residues: residues T1060–S1071, E1088–K1106, and N1166–D1192. Residues R1205–R1215 are compositionally biased toward basic residues. Residues N1261 to N1289 are compositionally biased toward low complexity. Composition is skewed to basic residues over residues K1660–K1686 and P1704–K1717.

This is an uncharacterized protein from Plasmodium falciparum (isolate 3D7).